The sequence spans 492 residues: Cobyric acid synthase (492 aa).

The 195-residue stretch at 259-453 folds into the GATase cobBQ-type domain; sequence HTTVAVVAYP…LHGLFEDAVA (195 aa). Catalysis depends on Cys-340, which acts as the Nucleophile. The active site involves His-445.

It belongs to the CobB/CobQ family. CobQ subfamily.

It participates in cofactor biosynthesis; adenosylcobalamin biosynthesis. Its function is as follows. Catalyzes amidations at positions B, D, E, and G on adenosylcobyrinic A,C-diamide. NH(2) groups are provided by glutamine, and one molecule of ATP is hydrogenolyzed for each amidation. This Paracidovorax citrulli (strain AAC00-1) (Acidovorax citrulli) protein is Cobyric acid synthase.